We begin with the raw amino-acid sequence, 469 residues long: Transcription factor phomD (469 aa).

The zn(2)-C6 fungal-type DNA-binding region spans 14-41 (CNACNESKVRCSQRKPTCARCERNGVEC). The tract at residues 49–118 (THKDAPPISM…QQKEEAAAAA (70 aa)) is disordered. The segment covering 82-93 (KANSNSSSNWHM) has biased composition (polar residues). The span at 104–118 (QQQQQQQKEEAAAAA) shows a compositional bias: low complexity.

The protein localises to the nucleus. In terms of biological role, transcription factor; part of the gene cluster that mediates the biosynthesis of the phomopsins, a group of hexapeptide mycotoxins which infects lupins and causes lupinosis disease in livestock. May play a role in the regulation of the production of phomopsins. The sequence is that of Transcription factor phomD from Diaporthe leptostromiformis (Lupinosis disease fungus).